A 383-amino-acid chain; its full sequence is Chitinase-3-like protein 1 (383 aa).

An N-terminal signal peptide occupies residues 1–21 (MGLRVAQTGFVVLVLLQSCAA). Residues 22 to 383 (YKLICYYTSW…NAIKDVLAGV (362 aa)) enclose the GH18 domain. A disulfide bond links C26 and C51. A glycan (N-linked (GlcNAc...) asparagine) is linked at N60. Residues 70–71 (EW), 97–100 (GGWN), Y141, 204–207 (LTYD), and K263 each bind chitin. A disulfide bridge links C300 with C364. Residues 324 to 338 (QWVAYDDQESVKNKA) are important for AKT1 activation and IL8 production. W352 serves as a coordination point for chitin.

This sequence belongs to the glycosyl hydrolase 18 family. As to quaternary structure, monomer. Detected in mammary gland.

The protein localises to the secreted. It localises to the extracellular space. The protein resides in the cytoplasm. It is found in the perinuclear region. Its subcellular location is the endoplasmic reticulum. Carbohydrate-binding lectin with a preference for chitin. Has no chitinase activity. May play a role in tissue remodeling and in the capacity of cells to respond to and cope with changes in their environment. Plays a role in T-helper cell type 2 (Th2) inflammatory response and IL-13-induced inflammation, regulating allergen sensitization, inflammatory cell apoptosis, dendritic cell accumulation and M2 macrophage differentiation. Facilitates invasion of pathogenic enteric bacteria into colonic mucosa and lymphoid organs. Mediates activation of AKT1 signaling pathway and subsequent IL8 production in colonic epithelial cells. Regulates antibacterial responses in lung by contributing to macrophage bacterial killing, controlling bacterial dissemination and augmenting host tolerance. Also regulates hyperoxia-induced injury, inflammation and epithelial apoptosis in lung. This chain is Chitinase-3-like protein 1 (CHI3L1), found in Bubalus bubalis (Domestic water buffalo).